The primary structure comprises 108 residues: Glutaredoxin (108 aa).

The 101-residue stretch at 3 to 103 (LAKAKEIVSG…PLLTEAGAIA (101 aa)) folds into the Glutaredoxin domain. Cysteines 23 and 26 form a disulfide.

The protein belongs to the glutaredoxin family. CPYC subfamily.

The protein resides in the cytoplasm. Has a glutathione-disulfide oxidoreductase activity in the presence of NADPH and glutathione reductase. Reduces low molecular weight disulfides and proteins. The chain is Glutaredoxin from Solanum lycopersicum (Tomato).